Consider the following 135-residue polypeptide: Ribonuclease P protein component (135 aa).

It belongs to the RnpA family. In terms of assembly, consists of a catalytic RNA component (M1 or rnpB) and a protein subunit.

It carries out the reaction Endonucleolytic cleavage of RNA, removing 5'-extranucleotides from tRNA precursor.. RNaseP catalyzes the removal of the 5'-leader sequence from pre-tRNA to produce the mature 5'-terminus. It can also cleave other RNA substrates such as 4.5S RNA. The protein component plays an auxiliary but essential role in vivo by binding to the 5'-leader sequence and broadening the substrate specificity of the ribozyme. In Xylella fastidiosa (strain Temecula1 / ATCC 700964), this protein is Ribonuclease P protein component.